The sequence spans 370 residues: Chloromuconate cycloisomerase (370 aa).

Lys165 functions as the Proton acceptor in the catalytic mechanism. Asp194, Glu220, and Asp245 together coordinate Mn(2+). Glu323 (proton donor) is an active-site residue.

The protein belongs to the mandelate racemase/muconate lactonizing enzyme family. Mn(2+) is required as a cofactor.

The enzyme catalyses 2-[(2R)-2-chloro-2,5-dihydro-5-oxofuryl]acetate = 3-chloro-cis,cis-muconate + H(+). Its pathway is aromatic compound metabolism; 3-chlorocatechol degradation. The chain is Chloromuconate cycloisomerase (tfdD) from Delftia acidovorans (Pseudomonas acidovorans).